Consider the following 131-residue polypeptide: Small ribosomal subunit protein uS8 (131 aa).

Belongs to the universal ribosomal protein uS8 family. Part of the 30S ribosomal subunit. Contacts proteins S5 and S12.

Functionally, one of the primary rRNA binding proteins, it binds directly to 16S rRNA central domain where it helps coordinate assembly of the platform of the 30S subunit. This Delftia acidovorans (strain DSM 14801 / SPH-1) protein is Small ribosomal subunit protein uS8.